The following is a 710-amino-acid chain: MGGKQRDEDDEAYGKPVKYDPSFRGPIKNRSCTDVICCVLFLLFILGYIVVGIVAWLYGDPRQVLYPRNSTGAYCGMGENKDKPYLLYFNIFSCILSSNIISVAENGLQCPTPQVCVSSCPEDPWTVGKNEFSQTVGEVFYTKNRNFCLPGVPWNMTVITSLQQELCPSFLLPSAPALGRCFPWTNVTPPALPGITNDTTIQQGISGLIDSLNARDISVKIFEDFAQSWYWILVALGVALVLSLLFILLLRLVAGPLVLVLILGVLGVLAYGIYYCWEEYRVLRDKGASISQLGFTTNLSAYQSVQETWLAALIVLAVLEAILLLMLIFLRQRIRIAIALLKEASKAVGQMMSTMFYPLVTFVLLLICIAYWAMTALYLATSGQPQYVLWASNISSPGCEKVPINTSCNPTAHLVNSSCPGLMCVFQGYSSKGLIQRSVFNLQIYGVLGLFWTLNWVLALGQCVLAGAFASFYWAFHKPQDIPTFPLISAFIRTLRYHTGSLAFGALILTLVQIARVILEYIDHKLRGVQNPVARCIMCCFKCCLWCLEKFIKFLNRNAYIMIAIYGKNFCVSAKNAFMLLMRNIVRVVVLDKVTDLLLFFGKLLVVGGVGVLSFFFFSGRIPGLGKDFKSPHLNYYWLPIMTSILGAYVIASGFFSVFGMCVDTLFLCFLEDLERNNGSLDRPYYMSKSLLKILGKKNEAPPDNKKRKK.

The Cytoplasmic segment spans residues 1–34 (MGGKQRDEDDEAYGKPVKYDPSFRGPIKNRSCTD). Residues 35 to 55 (VICCVLFLLFILGYIVVGIVA) form a helical membrane-spanning segment. The Extracellular segment spans residues 56–229 (WLYGDPRQVL…KIFEDFAQSW (174 aa)). N-linked (GlcNAc...) asparagine glycosylation is found at asparagine 69, asparagine 155, and asparagine 197. The chain crosses the membrane as a helical span at residues 230 to 250 (YWILVALGVALVLSLLFILLL). Residues 251 to 252 (RL) lie on the Cytoplasmic side of the membrane. The helical transmembrane segment at 253 to 273 (VAGPLVLVLILGVLGVLAYGI) threads the bilayer. Topologically, residues 274–309 (YYCWEEYRVLRDKGASISQLGFTTNLSAYQSVQETW) are extracellular. Residue asparagine 298 is glycosylated (N-linked (GlcNAc...) asparagine). The chain crosses the membrane as a helical span at residues 310 to 330 (LAALIVLAVLEAILLLMLIFL). At 331-358 (RQRIRIAIALLKEASKAVGQMMSTMFYP) the chain is on the cytoplasmic side. The helical transmembrane segment at 359-379 (LVTFVLLLICIAYWAMTALYL) threads the bilayer. Over 380-455 (ATSGQPQYVL…GVLGLFWTLN (76 aa)) the chain is Extracellular. 3 N-linked (GlcNAc...) asparagine glycosylation sites follow: asparagine 393, asparagine 405, and asparagine 416. The helical transmembrane segment at 456–476 (WVLALGQCVLAGAFASFYWAF) threads the bilayer. At 477–501 (HKPQDIPTFPLISAFIRTLRYHTGS) the chain is on the cytoplasmic side. The chain crosses the membrane as a helical span at residues 502 to 522 (LAFGALILTLVQIARVILEYI). Residues 523–560 (DHKLRGVQNPVARCIMCCFKCCLWCLEKFIKFLNRNAY) are Extracellular-facing. A helical membrane pass occupies residues 561-581 (IMIAIYGKNFCVSAKNAFMLL). Residues 582 to 597 (MRNIVRVVVLDKVTDL) lie on the Cytoplasmic side of the membrane. Residues 598 to 618 (LLFFGKLLVVGGVGVLSFFFF) traverse the membrane as a helical segment. The Extracellular portion of the chain corresponds to 619-638 (SGRIPGLGKDFKSPHLNYYW). The chain crosses the membrane as a helical span at residues 639–659 (LPIMTSILGAYVIASGFFSVF). Residues 660–710 (GMCVDTLFLCFLEDLERNNGSLDRPYYMSKSLLKILGKKNEAPPDNKKRKK) lie on the Cytoplasmic side of the membrane.

This sequence belongs to the CTL (choline transporter-like) family. Post-translationally, N-glycosylated; N-glycosylation of Asn-69, Asn-155 and Asn-393 is required for a proper thiamine pyrophosphate uptake. Highly expressed in colon, also detected in prostate, trachea and lung. Isoform 3 is also expressed in colon but a lower levels. In terms of tissue distribution, expressed in colon at low levels.

It localises to the membrane. Its subcellular location is the apical cell membrane. It carries out the reaction choline(out) + n H(+)(in) = choline(in) + n H(+)(out). The catalysed reaction is thiamine diphosphate(out) = thiamine diphosphate(in). Choline transporter that plays a role in the choline-acetylcholine system and is required to the efferent innervation of hair cells in the olivocochlear bundle for the maintenance of physiological function of outer hair cells and the protection of hair cells from acoustic injury. Also described as a thiamine pyrophosphate transporter in colon, may mediate the absorption of microbiota-generated thiamine pyrophosphate and contribute to host thiamine (vitamin B1) homeostasis. In terms of biological role, also has thiamine pyrophosphate transporter activity. The polypeptide is Choline transporter-like protein 4 (Homo sapiens (Human)).